The following is a 168-amino-acid chain: Cell division inhibitor SulA (168 aa).

A ftsZ binding region spans residues 106-112 (ALLTGNY). Positions 161 to 168 (KIHSSLYH) are lon protease binding.

Belongs to the SulA family. As to quaternary structure, interacts with FtsZ. Post-translationally, is rapidly cleaved and degraded by the Lon protease once DNA damage is repaired.

In terms of biological role, component of the SOS system and an inhibitor of cell division. Accumulation of SulA causes rapid cessation of cell division and the appearance of long, non-septate filaments. In the presence of GTP, binds a polymerization-competent form of FtsZ in a 1:1 ratio, thus inhibiting FtsZ polymerization and therefore preventing it from participating in the assembly of the Z ring. This mechanism prevents the premature segregation of damaged DNA to daughter cells during cell division. The sequence is that of Cell division inhibitor SulA from Serratia proteamaculans (strain 568).